Here is a 140-residue protein sequence, read N- to C-terminus: 3-hydroxyacyl-[acyl-carrier-protein] dehydratase FabZ (140 aa).

Residue histidine 47 is part of the active site.

This sequence belongs to the thioester dehydratase family. FabZ subfamily.

The protein resides in the cytoplasm. The catalysed reaction is a (3R)-hydroxyacyl-[ACP] = a (2E)-enoyl-[ACP] + H2O. Functionally, involved in unsaturated fatty acids biosynthesis. Catalyzes the dehydration of short chain beta-hydroxyacyl-ACPs and long chain saturated and unsaturated beta-hydroxyacyl-ACPs. In Streptococcus pyogenes serotype M49 (strain NZ131), this protein is 3-hydroxyacyl-[acyl-carrier-protein] dehydratase FabZ.